Here is a 318-residue protein sequence, read N- to C-terminus: Porphobilinogen deaminase (318 aa).

Residue Cys-241 is modified to S-(dipyrrolylmethanemethyl)cysteine.

The protein belongs to the HMBS family. In terms of assembly, monomer. Requires dipyrromethane as cofactor.

The enzyme catalyses 4 porphobilinogen + H2O = hydroxymethylbilane + 4 NH4(+). It participates in porphyrin-containing compound metabolism; protoporphyrin-IX biosynthesis; coproporphyrinogen-III from 5-aminolevulinate: step 2/4. In terms of biological role, tetrapolymerization of the monopyrrole PBG into the hydroxymethylbilane pre-uroporphyrinogen in several discrete steps. This is Porphobilinogen deaminase from Geotalea daltonii (strain DSM 22248 / JCM 15807 / FRC-32) (Geobacter daltonii).